The primary structure comprises 427 residues: Glutamate-1-semialdehyde 2,1-aminomutase 1 (427 aa).

N6-(pyridoxal phosphate)lysine is present on K267.

It belongs to the class-III pyridoxal-phosphate-dependent aminotransferase family. HemL subfamily. As to quaternary structure, homodimer. Pyridoxal 5'-phosphate serves as cofactor.

The protein localises to the cytoplasm. The catalysed reaction is (S)-4-amino-5-oxopentanoate = 5-aminolevulinate. It functions in the pathway porphyrin-containing compound metabolism; protoporphyrin-IX biosynthesis; 5-aminolevulinate from L-glutamyl-tRNA(Glu): step 2/2. This Macrococcus caseolyticus (strain JCSC5402) (Macrococcoides caseolyticum) protein is Glutamate-1-semialdehyde 2,1-aminomutase 1.